Consider the following 197-residue polypeptide: Elongation factor Ts (197 aa).

Residues T81–V84 form an involved in Mg(2+) ion dislocation from EF-Tu region.

Belongs to the EF-Ts family.

It is found in the cytoplasm. In terms of biological role, associates with the EF-Tu.GDP complex and induces the exchange of GDP to GTP. It remains bound to the aminoacyl-tRNA.EF-Tu.GTP complex up to the GTP hydrolysis stage on the ribosome. This chain is Elongation factor Ts, found in Fervidobacterium nodosum (strain ATCC 35602 / DSM 5306 / Rt17-B1).